A 475-amino-acid polypeptide reads, in one-letter code: 3-isopropylmalate dehydratase large subunit (475 aa).

[4Fe-4S] cluster-binding residues include Cys-348, Cys-408, and Cys-411.

Belongs to the aconitase/IPM isomerase family. LeuC type 1 subfamily. Heterodimer of LeuC and LeuD. [4Fe-4S] cluster serves as cofactor.

It catalyses the reaction (2R,3S)-3-isopropylmalate = (2S)-2-isopropylmalate. Its pathway is amino-acid biosynthesis; L-leucine biosynthesis; L-leucine from 3-methyl-2-oxobutanoate: step 2/4. Catalyzes the isomerization between 2-isopropylmalate and 3-isopropylmalate, via the formation of 2-isopropylmaleate. This chain is 3-isopropylmalate dehydratase large subunit, found in Acidobacterium capsulatum (strain ATCC 51196 / DSM 11244 / BCRC 80197 / JCM 7670 / NBRC 15755 / NCIMB 13165 / 161).